The chain runs to 238 residues: Ribonuclease PH (238 aa).

Phosphate contacts are provided by residues R86 and 124-126 (GTR).

It belongs to the RNase PH family. Homohexameric ring arranged as a trimer of dimers.

It carries out the reaction tRNA(n+1) + phosphate = tRNA(n) + a ribonucleoside 5'-diphosphate. Its function is as follows. Phosphorolytic 3'-5' exoribonuclease that plays an important role in tRNA 3'-end maturation. Removes nucleotide residues following the 3'-CCA terminus of tRNAs; can also add nucleotides to the ends of RNA molecules by using nucleoside diphosphates as substrates, but this may not be physiologically important. Probably plays a role in initiation of 16S rRNA degradation (leading to ribosome degradation) during starvation. In Citrobacter koseri (strain ATCC BAA-895 / CDC 4225-83 / SGSC4696), this protein is Ribonuclease PH.